Reading from the N-terminus, the 766-residue chain is MIWRRRAGAELSSLMALWEWIVLSLHCWVLAVAAVSDQHATSPFDWLLSDKGPFHRSQEYTDFVDRSRQGFSTRYKIYREFGRWKVNNLAVERRNFLGSPLPLAPEFFRNIRLLGRRPTLQQITENLIKKYGTHFLLSATLGGEESLTIFVDKRKLSKRSEGSETSTNSSSVTLETLHQLAASYFIDRDSTLRRLHHIQIASTAIKVTETRTGPLGCSNYDNLDSVSSVLVQSPENKIQLQGLQVLLPDYLQERFVQAALSYIACNSEGEFICKDNDCWCHCGPKFPECNCPSMDIQAMEENLLRITETWKAYNSDFEDSDEFKFFMKRLPMNYFLNTSTIMHLWTMDSNFQRRYEQLENSMKQLFLKAHRIVHKLFSLSKRCHKQPLISLPRQRTSTYWLTRIQSFLYCNENGLLGSFSEETHSCTCPNDQVVCTAFLPCTVGDASACLTCAPDNRTRCGTCNTGYMLSQGLCKPEVAESTDHYIGFETDLQDLEMKYLLQKTDRRIEVHAIFISNDMRLNSWFDPSWRKRMLLTLKSNKYKSSLVHMILGLSLQICLTKNSTLEPVLAVYVNPFGGSHSESWFMPVSESSFPDWERTKLDLPLQCYNWTLTLGNKWKTFFETVHIYLRSRIKANGPNSNESIYYEPLEFIDPSRNLGYMKINNIQVFGYSMHFDPEAIRDLILQLDYPYTQGSQDSALLQLLEIRDRVNKLSPPGQRRLDLFSCLLRHRLKLSTSEVVRIQSALQAFNAKLPNTVDYDTTKLCS.

Residues 1 to 33 form the signal peptide; the sequence is MIWRRRAGAELSSLMALWEWIVLSLHCWVLAVA. An MACPF domain is found at 74–264; it reads RYKIYREFGR…FVQAALSYIA (191 aa). Residues Asn168, Asn337, Asn456, Asn562, Asn609, and Asn641 are each glycosylated (N-linked (GlcNAc...) asparagine).

This sequence belongs to the BRINP family. In terms of tissue distribution, expressed in the brain. Weakly expressed in embryonic stem (ES) cells. Expressed in ES-derived neural stem cells (NSCs) and neuronal cells.

Its subcellular location is the secreted. The protein resides in the mitochondrion. Inhibits neuronal cell proliferation by negative regulation of the cell cycle transition. Promotes pituitary gonadotrope cell proliferation, migration and invasion, when overexpressed. May play a role in cell pituitary tumor development. This chain is BMP/retinoic acid-inducible neural-specific protein 3 (Brinp3), found in Mus musculus (Mouse).